A 130-amino-acid polypeptide reads, in one-letter code: DNA-directed RNA polymerase subunit omega (130 aa).

The disordered stretch occupies residues 107 to 130 (SLDVSQESHDDEIDDQDSGEEVPI). Residues 115-130 (HDDEIDDQDSGEEVPI) show a composition bias toward acidic residues.

The protein belongs to the RNA polymerase subunit omega family. As to quaternary structure, the RNAP catalytic core consists of 2 alpha, 1 beta, 1 beta' and 1 omega subunit. When a sigma factor is associated with the core the holoenzyme is formed, which can initiate transcription.

It carries out the reaction RNA(n) + a ribonucleoside 5'-triphosphate = RNA(n+1) + diphosphate. In terms of biological role, promotes RNA polymerase assembly. Latches the N- and C-terminal regions of the beta' subunit thereby facilitating its interaction with the beta and alpha subunits. The protein is DNA-directed RNA polymerase subunit omega of Wolbachia pipientis subsp. Culex pipiens (strain wPip).